The following is a 270-amino-acid chain: Formamidopyrimidine-DNA glycosylase (270 aa).

Pro2 functions as the Schiff-base intermediate with DNA in the catalytic mechanism. Glu3 acts as the Proton donor in catalysis. Lys58 serves as the catalytic Proton donor; for beta-elimination activity. The DNA site is built by His91, Arg110, and Arg151. The FPG-type zinc finger occupies 236 to 270; it reads FVYGRGGENCKVCGTGLREIKLGQRASVYCPRCQS. The active-site Proton donor; for delta-elimination activity is the Arg260.

The protein belongs to the FPG family. Monomer. It depends on Zn(2+) as a cofactor.

The catalysed reaction is Hydrolysis of DNA containing ring-opened 7-methylguanine residues, releasing 2,6-diamino-4-hydroxy-5-(N-methyl)formamidopyrimidine.. It carries out the reaction 2'-deoxyribonucleotide-(2'-deoxyribose 5'-phosphate)-2'-deoxyribonucleotide-DNA = a 3'-end 2'-deoxyribonucleotide-(2,3-dehydro-2,3-deoxyribose 5'-phosphate)-DNA + a 5'-end 5'-phospho-2'-deoxyribonucleoside-DNA + H(+). Its function is as follows. Involved in base excision repair of DNA damaged by oxidation or by mutagenic agents. Acts as a DNA glycosylase that recognizes and removes damaged bases. Has a preference for oxidized purines, such as 7,8-dihydro-8-oxoguanine (8-oxoG). Has AP (apurinic/apyrimidinic) lyase activity and introduces nicks in the DNA strand. Cleaves the DNA backbone by beta-delta elimination to generate a single-strand break at the site of the removed base with both 3'- and 5'-phosphates. In Pseudomonas fluorescens (strain ATCC BAA-477 / NRRL B-23932 / Pf-5), this protein is Formamidopyrimidine-DNA glycosylase.